The following is a 486-amino-acid chain: Catalase (486 aa).

The segment at 1–28 (MENKKLTAANGRPIADNQNSQTAGPRGP) is disordered. Residues histidine 54 and asparagine 127 contribute to the active site. Heme is bound at residue tyrosine 337.

This sequence belongs to the catalase family. In terms of assembly, homodimer. It depends on heme as a cofactor.

The catalysed reaction is 2 H2O2 = O2 + 2 H2O. Functionally, decomposes hydrogen peroxide into water and oxygen; serves to protect cells from the toxic effects of hydrogen peroxide. May be involved in aerotolerance of B.fragilis. The protein is Catalase (katA) of Bacteroides fragilis (strain YCH46).